A 401-amino-acid polypeptide reads, in one-letter code: MKDKIVLAYSGGLDTSVAVQWLIDKGYDVVACCLDVGEGKDLDVVYQKALDMGAVECHIIDATKEFSDDYVSYAIKGNLMYENAYPLVSALSRPLIAKKLVEIAEKTNSIGIAHGCTGKGNDQVRFEVAIKALNPKLKAFAPVREWAWSREEEIDYAIKHNIPVSINYDSPYSIDQNLWGRANECGILEDPYAAPPEDAFDLTTPLEETPDNADEIILTFKQGIPVQVDGKDYQLDDLILYLNQLAGKHGIGRIDHVENRMVGIKSREIYETPGAEVILKAHKALETITLTKDVAHFKPVIEKQFSEQIYNGLWFSPLTDSLKLFIDSTQQYVEGDVRIKLFKGNAIVNGRQSPYTLYDEKLATYTKEDAFNQESAVGFIDIYGLPTQVNALLHGGYSNEQ.

8–16 (AYSGGLDTS) is a binding site for ATP. Tyrosine 85 lines the L-citrulline pocket. ATP is bound at residue glycine 115. Residues threonine 117, asparagine 121, and aspartate 122 each coordinate L-aspartate. Asparagine 121 is a binding site for L-citrulline. 4 residues coordinate L-citrulline: arginine 125, serine 173, glutamate 258, and tyrosine 270.

The protein belongs to the argininosuccinate synthase family. Type 1 subfamily. As to quaternary structure, homotetramer.

The protein resides in the cytoplasm. The catalysed reaction is L-citrulline + L-aspartate + ATP = 2-(N(omega)-L-arginino)succinate + AMP + diphosphate + H(+). It participates in amino-acid biosynthesis; L-arginine biosynthesis; L-arginine from L-ornithine and carbamoyl phosphate: step 2/3. This is Argininosuccinate synthase from Staphylococcus epidermidis (strain ATCC 35984 / DSM 28319 / BCRC 17069 / CCUG 31568 / BM 3577 / RP62A).